A 351-amino-acid polypeptide reads, in one-letter code: Probable cell division control protein 7 homolog 1 (351 aa).

The Protein kinase domain maps to 21-341 (YTPIEKIGEG…ASDALSHPFF (321 aa)). Residues 27–35 (IGEGSFSVV) and lysine 50 each bind ATP. Catalysis depends on aspartate 137, which acts as the Proton acceptor.

This sequence belongs to the protein kinase superfamily. Ser/Thr protein kinase family. CDC7 subfamily. Requires Mg(2+) as cofactor.

The catalysed reaction is L-seryl-[protein] + ATP = O-phospho-L-seryl-[protein] + ADP + H(+). It catalyses the reaction L-threonyl-[protein] + ATP = O-phospho-L-threonyl-[protein] + ADP + H(+). In terms of biological role, serine/threonine-protein kinase. Needed for the initiation of DNA synthesis during mitosis as well as for synaptonemal complex formation and commitment to recombination during meiosis. The polypeptide is Probable cell division control protein 7 homolog 1 (CDC7-1) (Encephalitozoon cuniculi (strain GB-M1) (Microsporidian parasite)).